The primary structure comprises 329 residues: Ketol-acid reductoisomerase (NADP(+)) (329 aa).

One can recognise a KARI N-terminal Rossmann domain in the interval 2-182 (TQLFYDTDAD…GGTRAGILET (181 aa)). Residues 25–28 (YGSQ), Ser51, Ser53, and 83–86 (DEFQ) each bind NADP(+). The active site involves His108. Gly134 contributes to the NADP(+) binding site. A KARI C-terminal knotted domain is found at 183–328 (NFKEETETDL…KGLRSMFSWL (146 aa)). Mg(2+)-binding residues include Asp191, Glu195, Glu227, and Glu231. Ser252 provides a ligand contact to substrate.

It belongs to the ketol-acid reductoisomerase family. It depends on Mg(2+) as a cofactor.

The enzyme catalyses (2R)-2,3-dihydroxy-3-methylbutanoate + NADP(+) = (2S)-2-acetolactate + NADPH + H(+). The catalysed reaction is (2R,3R)-2,3-dihydroxy-3-methylpentanoate + NADP(+) = (S)-2-ethyl-2-hydroxy-3-oxobutanoate + NADPH + H(+). It participates in amino-acid biosynthesis; L-isoleucine biosynthesis; L-isoleucine from 2-oxobutanoate: step 2/4. Its pathway is amino-acid biosynthesis; L-valine biosynthesis; L-valine from pyruvate: step 2/4. Its function is as follows. Involved in the biosynthesis of branched-chain amino acids (BCAA). Catalyzes an alkyl-migration followed by a ketol-acid reduction of (S)-2-acetolactate (S2AL) to yield (R)-2,3-dihydroxy-isovalerate. In the isomerase reaction, S2AL is rearranged via a Mg-dependent methyl migration to produce 3-hydroxy-3-methyl-2-ketobutyrate (HMKB). In the reductase reaction, this 2-ketoacid undergoes a metal-dependent reduction by NADPH to yield (R)-2,3-dihydroxy-isovalerate. In Prochlorococcus marinus (strain AS9601), this protein is Ketol-acid reductoisomerase (NADP(+)).